Consider the following 189-residue polypeptide: Elongation factor P (189 aa).

Belongs to the elongation factor P family.

It is found in the cytoplasm. It functions in the pathway protein biosynthesis; polypeptide chain elongation. Functionally, involved in peptide bond synthesis. Stimulates efficient translation and peptide-bond synthesis on native or reconstituted 70S ribosomes in vitro. Probably functions indirectly by altering the affinity of the ribosome for aminoacyl-tRNA, thus increasing their reactivity as acceptors for peptidyl transferase. The sequence is that of Elongation factor P from Orientia tsutsugamushi (strain Boryong) (Rickettsia tsutsugamushi).